A 1005-amino-acid polypeptide reads, in one-letter code: DNA polymerase (1005 aa).

This sequence belongs to the DNA polymerase type-B family. In terms of assembly, interacts with OPG148. Component of the Uracil-DNA glycosylase(UDG)-OPG148-polymerase complex; OPG148 and OPG116/UDG form a heterodimeric processivity factor that associates with OPG071 to form the processive polymerase holoenzyme.

It catalyses the reaction DNA(n) + a 2'-deoxyribonucleoside 5'-triphosphate = DNA(n+1) + diphosphate. In terms of biological role, catalyzes DNA synthesis. Acquires processivity by associating with a heterodimeric processivity factor comprised of the viral OPG148 and OPG116 proteins, thereby forming the DNA polymerase holoenzyme. Displays 3'- to 5' exonuclease activity. Might participate in viral DNA recombination. Does not perform OPG116/D4synthesis across an abasic site. The chain is DNA polymerase (OPG071) from Variola virus (isolate Human/India/Ind3/1967) (VARV).